The following is a 331-amino-acid chain: Dof zinc finger protein DOF1.1 (331 aa).

Residues 77 to 131 (LKCPRCDSSNTKFCYYNNYNLTQPRHFCKGCRRYWTQGGALRNVPVGGGCRRNNK) form a Dof-type zinc finger. 4 residues coordinate Zn(2+): cysteine 79, cysteine 82, cysteine 104, and cysteine 107. Disordered stretches follow at residues 121 to 166 (PVGG…TNHQ) and 291 to 331 (EEQP…NDLL). The span at 135–160 (NGNLKSSSSSSKQSSSVNAQSPSSGQ) shows a compositional bias: low complexity. Over residues 305–316 (GLTSPGNQTNQY) the composition is skewed to polar residues.

Interacts with OBF4. In terms of tissue distribution, expressed in the vasculature (mainly in the phloem and associated cell files) of cotyledons, leaves, roots, flower stalks and petals. The PEAR proteins (e.g. DOF2.4, DOF5.1, DOF3.2, DOF1.1, DOF5.6 and DOF5.3) form a short-range concentration gradient that peaks at protophloem sieve elements (PSE).

It localises to the nucleus. In terms of biological role, transcription factor that binds specifically to a 5'-AA[AG]G-3' consensus core sequence. Enhances the DNA binding of OBF transcription factors to OCS elements. Involved in the regulation of root development. The PEAR proteins (e.g. DOF2.4, DOF5.1, DOF3.2, DOF1.1, DOF5.6 and DOF5.3) activate gene expression that promotes radial growth of protophloem sieve elements. Element of a regulatory network controlling indole glucosinolates (IGS) biosynthesis, probably by inducing the expression of accurate genes (e.g. CYP83B1). Promotes apical dominance. This is Dof zinc finger protein DOF1.1 from Arabidopsis thaliana (Mouse-ear cress).